Reading from the N-terminus, the 287-residue chain is MAASAHAPTASEYIVHHLQHLQNVPQTKIVDFSVVNYDSMVLALLLGGLTLLILWTAARKASCGVPGRLQAAVEILVEMVDNQAKANIHNAESRKFIAPLGLVVFVWVFLMNAMDMVPVDLLPSIWGQIRQDSHEPLRVVPTADLSTTMGLALAVLGLRFWYSLKIKGAGGWAHELVSAPFGTSKNPLFALILGLVNLLMQVIEYVANTVSHGMRLFGNMYAGELVFMLIALMGGAAALSLSGVLLPVGHVIAGTLWTLFHILVITLQAFIFMMLALIYLGQAHNAH.

Transmembrane regions (helical) follow at residues 38 to 58, 96 to 116, 139 to 161, 187 to 207, 225 to 245, and 259 to 279; these read DSMVLALLLGGLTLLILWTAA, FIAPLGLVVFVWVFLMNAMDM, VVPTADLSTTMGLALAVLGLRFW, PLFALILGLVNLLMQVIEYVA, LVFMLIALMGGAAALSLSGVL, and LFHILVITLQAFIFMMLALIY.

Belongs to the ATPase A chain family. F-type ATPases have 2 components, CF(1) - the catalytic core - and CF(0) - the membrane proton channel. CF(1) has five subunits: alpha(3), beta(3), gamma(1), delta(1), epsilon(1). CF(0) has three main subunits: a(1), b(2) and c(9-12). The alpha and beta chains form an alternating ring which encloses part of the gamma chain. CF(1) is attached to CF(0) by a central stalk formed by the gamma and epsilon chains, while a peripheral stalk is formed by the delta and b chains.

It localises to the cell inner membrane. In terms of biological role, key component of the proton channel; it plays a direct role in the translocation of protons across the membrane. The polypeptide is ATP synthase subunit a (Verminephrobacter eiseniae (strain EF01-2)).